Reading from the N-terminus, the 306-residue chain is Transcription factor MYBS1 (306 aa).

In terms of domain architecture, Myb-like spans 18–73 (WTREDDKAFENALAACAAPPPADGGAPDDDWFAALAASVPGARSAEEVRRHYEALV). Positions 72-86 (LVEDVAAIDAGRVPL) match the Nuclear export signal 1 motif. The tract at residues 89–142 (YAGEESAAPPDGAGAAAAASKDGGHRRDERKGGGGGYDGGKSCSKAEQERRKGI) is disordered. Positions 92–109 (EESAAPPDGAGAAAAASK) are enriched in low complexity. Composition is skewed to basic and acidic residues over residues 110-120 (DGGHRRDERKG) and 132-142 (SKAEQERRKGI). Positions 133–140 (KAEQERRK) match the Nuclear localization signal 1 motif. Positions 136 to 192 (QERRKGIPWTEEEHRLFLLGLDKFGKGDWRSISRNFVISRTPTQVASHAQKYFIRLN) constitute an HTH myb-type domain. The segment at residues 164 to 188 (WRSISRNFVISRTPTQVASHAQKYF) is a DNA-binding region (H-T-H motif). The short motif at 196-200 (RDRRR) is the Nuclear localization signal 2 element. The Nuclear export signal 2 motif lies at 203–215 (IHDITSVTAGDQV). The span at 228 to 241 (ATGNPAAAALGPPG) shows a compositional bias: low complexity. Positions 228-255 (ATGNPAAAALGPPGMKHHHHHHPGGAPP) are disordered.

As to quaternary structure, homodimer. Interacts with GAMYB. Expressed in aboveground tissues, with the highest level in leaves.

It localises to the nucleus. It is found in the cytoplasm. Transcription activator that binds to 5'-TATCCA-3' elements in gene promoters. Derepresses strongly the sugar-repressed transcription of promoters containing SRS or 5'-TATCCA-3' elements. Functions with GAMYB to integrate diverse nutrient starvation and gibberellin (GA) signaling pathways during germination of grains. Sugar, nitrogen and phosphate starvation signals converge and interconnect with GA to promote the co-nuclear import of MYBS1 and GAMYB, resulting in the expression of a large set of GA-inducible hydrolases, transporters, and regulators that are essential for mobilization of nutrient reserves in the endosperm to support seedling growth. This is Transcription factor MYBS1 from Oryza sativa subsp. japonica (Rice).